Consider the following 367-residue polypeptide: Histidinol-phosphate aminotransferase (367 aa).

Lys-225 carries the post-translational modification N6-(pyridoxal phosphate)lysine.

Belongs to the class-II pyridoxal-phosphate-dependent aminotransferase family. Histidinol-phosphate aminotransferase subfamily. In terms of assembly, homodimer. It depends on pyridoxal 5'-phosphate as a cofactor.

It carries out the reaction L-histidinol phosphate + 2-oxoglutarate = 3-(imidazol-4-yl)-2-oxopropyl phosphate + L-glutamate. It functions in the pathway amino-acid biosynthesis; L-histidine biosynthesis; L-histidine from 5-phospho-alpha-D-ribose 1-diphosphate: step 7/9. The sequence is that of Histidinol-phosphate aminotransferase from Hyphomonas neptunium (strain ATCC 15444).